Reading from the N-terminus, the 510-residue chain is Lysine--tRNA ligase (510 aa).

The Mg(2+) site is built by Glu-420 and Glu-427.

It belongs to the class-II aminoacyl-tRNA synthetase family. Homodimer. The cofactor is Mg(2+).

Its subcellular location is the cytoplasm. It catalyses the reaction tRNA(Lys) + L-lysine + ATP = L-lysyl-tRNA(Lys) + AMP + diphosphate. The polypeptide is Lysine--tRNA ligase (Vibrio vulnificus (strain CMCP6)).